Here is a 72-residue protein sequence, read N- to C-terminus: Large ribosomal subunit protein bL32 (72 aa).

The protein belongs to the bacterial ribosomal protein bL32 family.

This chain is Large ribosomal subunit protein bL32, found in Dehalococcoides mccartyi (strain ATCC BAA-2266 / KCTC 15142 / 195) (Dehalococcoides ethenogenes (strain 195)).